Here is a 504-residue protein sequence, read N- to C-terminus: Glucose-6-phosphate isomerase (504 aa).

E333 serves as the catalytic Proton donor. Catalysis depends on residues H364 and K473.

The protein belongs to the GPI family.

It localises to the cytoplasm. The enzyme catalyses alpha-D-glucose 6-phosphate = beta-D-fructose 6-phosphate. It participates in carbohydrate biosynthesis; gluconeogenesis. The protein operates within carbohydrate degradation; glycolysis; D-glyceraldehyde 3-phosphate and glycerone phosphate from D-glucose: step 2/4. Functionally, catalyzes the reversible isomerization of glucose-6-phosphate to fructose-6-phosphate. The sequence is that of Glucose-6-phosphate isomerase from Xanthomonas euvesicatoria pv. vesicatoria (strain 85-10) (Xanthomonas campestris pv. vesicatoria).